Here is a 461-residue protein sequence, read N- to C-terminus: Type IV secretion system protein PtlD homolog (461 aa).

Residues 1 to 24 (MAGLSRILLSCTLACLLAGQAAQA) form the signal peptide. The next 5 helical transmembrane spans lie at 118–138 (LQPL…YALL), 232–252 (WLLC…LAAS), 253–273 (LLIV…LFLV), 294–314 (ALVF…VLAG), and 333–353 (MLAA…VPLA). A compositionally biased stretch (low complexity) spans 376–411 (AHRQAAARQYAPRPAAAAAAAGPHQAGTYAASATPA). Positions 376-461 (AHRQAAARQY…RVLPRKPNLP (86 aa)) are disordered. The segment covering 439–453 (VRRDDRPAPAPDRRV) has biased composition (basic and acidic residues).

Its subcellular location is the cell membrane. The sequence is that of Type IV secretion system protein PtlD homolog (ptlD) from Bordetella bronchiseptica (strain ATCC BAA-588 / NCTC 13252 / RB50) (Alcaligenes bronchisepticus).